The following is a 181-amino-acid chain: Probable pyruvoyl-dependent arginine decarboxylase (181 aa).

Position 43 is a pyruvic acid (Ser) (S43).

It belongs to the PdaD family. Pyruvate is required as a cofactor.

The enzyme catalyses L-arginine + H(+) = agmatine + CO2. The sequence is that of Probable pyruvoyl-dependent arginine decarboxylase from Chlorobium phaeovibrioides (strain DSM 265 / 1930) (Prosthecochloris vibrioformis (strain DSM 265)).